The sequence spans 312 residues: Olfactory receptor 2T10 (312 aa).

Topologically, residues 1–25 (MRLANQTLGGDFFLLGIFSQISHPG) are extracellular. N-linked (GlcNAc...) asparagine glycosylation is present at Asn5. The chain crosses the membrane as a helical span at residues 26-49 (RLCLLIFSIFLMAVSWNITLILLI). Topologically, residues 50-57 (HIDSSLHT) are cytoplasmic. Residues 58–79 (PMYFFINQLSLIDLTYISVTVP) traverse the membrane as a helical segment. At 80-100 (KMLVNQLAKDKTISVLGCGTQ) the chain is on the extracellular side. Residues Cys97 and Cys189 are joined by a disulfide bond. Residues 101-120 (MYFYLQLGGAECCLLAAMAY) form a helical membrane-spanning segment. The Cytoplasmic segment spans residues 121–139 (DRYVAICHPLRYSVLMSHR). The helical transmembrane segment at 140-158 (VCLLLASGCWFVGSVDGFM) threads the bilayer. Over 159–195 (LTPIAMSFPFCRSHEIQHFFCEVPAVLKLSCSDTSLY) the chain is Extracellular. A helical transmembrane segment spans residues 196-219 (KIFMYLCCVIMLLIPVTVISVSYY). Topologically, residues 220–236 (YIILTIHKMNSVEGRKK) are cytoplasmic. The chain crosses the membrane as a helical span at residues 237 to 259 (AFTTCSSHITVVSLFYGAAIYNY). The Extracellular segment spans residues 260–272 (MLPSSYQTPEKDM). Residues 273-292 (MSSFFYTILTPVLNPIIYSF) form a helical membrane-spanning segment. The Cytoplasmic portion of the chain corresponds to 293–312 (RNKDVTRALKKMLSVQKPPY).

It belongs to the G-protein coupled receptor 1 family.

Its subcellular location is the cell membrane. Odorant receptor. In Homo sapiens (Human), this protein is Olfactory receptor 2T10 (OR2T10).